The primary structure comprises 312 residues: Methionyl-tRNA formyltransferase (312 aa).

A (6S)-5,6,7,8-tetrahydrofolate-binding site is contributed by 112-115 (SLLP).

It belongs to the Fmt family.

It carries out the reaction L-methionyl-tRNA(fMet) + (6R)-10-formyltetrahydrofolate = N-formyl-L-methionyl-tRNA(fMet) + (6S)-5,6,7,8-tetrahydrofolate + H(+). In terms of biological role, attaches a formyl group to the free amino group of methionyl-tRNA(fMet). The formyl group appears to play a dual role in the initiator identity of N-formylmethionyl-tRNA by promoting its recognition by IF2 and preventing the misappropriation of this tRNA by the elongation apparatus. In Dehalococcoides mccartyi (strain ATCC BAA-2266 / KCTC 15142 / 195) (Dehalococcoides ethenogenes (strain 195)), this protein is Methionyl-tRNA formyltransferase.